The chain runs to 185 residues: Elongation factor P (185 aa).

The protein belongs to the elongation factor P family.

Its subcellular location is the cytoplasm. It participates in protein biosynthesis; polypeptide chain elongation. Involved in peptide bond synthesis. Stimulates efficient translation and peptide-bond synthesis on native or reconstituted 70S ribosomes in vitro. Probably functions indirectly by altering the affinity of the ribosome for aminoacyl-tRNA, thus increasing their reactivity as acceptors for peptidyl transferase. The polypeptide is Elongation factor P (Mesomycoplasma hyopneumoniae (strain J / ATCC 25934 / NCTC 10110) (Mycoplasma hyopneumoniae)).